A 402-amino-acid chain; its full sequence is Argininosuccinate synthase (402 aa).

Residues 10–18 and alanine 38 contribute to the ATP site; that span reads AYSGGVDTS. L-citrulline is bound at residue tyrosine 89. Glycine 119 contacts ATP. Residues threonine 121, asparagine 125, and aspartate 126 each coordinate L-aspartate. Asparagine 125 contributes to the L-citrulline binding site. L-citrulline-binding residues include arginine 129, serine 177, serine 186, glutamate 262, and tyrosine 274.

This sequence belongs to the argininosuccinate synthase family. Type 1 subfamily. As to quaternary structure, homotetramer.

It localises to the cytoplasm. The enzyme catalyses L-citrulline + L-aspartate + ATP = 2-(N(omega)-L-arginino)succinate + AMP + diphosphate + H(+). The protein operates within amino-acid biosynthesis; L-arginine biosynthesis; L-arginine from L-ornithine and carbamoyl phosphate: step 2/3. This is Argininosuccinate synthase from Prochlorococcus marinus (strain SARG / CCMP1375 / SS120).